We begin with the raw amino-acid sequence, 140 residues long: uncharacterized protein (140 aa).

This is an uncharacterized protein from Mycoplasma genitalium (strain ATCC 33530 / DSM 19775 / NCTC 10195 / G37) (Mycoplasmoides genitalium).